The chain runs to 374 residues: All-trans-retinol dehydrogenase [NAD(+)] ADH7 (374 aa).

7 residues coordinate Zn(2+): cysteine 47, histidine 68, cysteine 98, cysteine 101, cysteine 104, cysteine 112, and cysteine 174. NAD(+) contacts are provided by residues 199-204 (GLGGVG), aspartate 223, lysine 228, 292-294 (VGA), and arginine 369.

The protein belongs to the zinc-containing alcohol dehydrogenase family. Class-IV subfamily. Homodimer. Zn(2+) serves as cofactor. In terms of tissue distribution, high expression in the stomach mucosa. Lower expression in eye, thymus, skin and ovary. Very low expression in small intestine, liver and uterus.

It localises to the cytoplasm. It catalyses the reaction a primary alcohol + NAD(+) = an aldehyde + NADH + H(+). The catalysed reaction is 10-hydroxydecanoate + NAD(+) = 10-oxodecanoate + NADH + H(+). It carries out the reaction all-trans-retinol + NAD(+) = all-trans-retinal + NADH + H(+). The enzyme catalyses 9-cis-retinol + NAD(+) = 9-cis-retinal + NADH + H(+). It catalyses the reaction all-trans-3,4-didehydroretinol + NAD(+) = all-trans-3,4-didehydroretinal + NADH + H(+). The catalysed reaction is all-trans-4-hydroxyretinol + NAD(+) = all-trans-4-hydroxyretinal + NADH + H(+). It carries out the reaction all-trans-4-oxoretinol + NAD(+) = all-trans-4-oxoretinal + NADH + H(+). The enzyme catalyses 12-hydroxydodecanoate + NAD(+) = 12-oxododecanoate + NADH + H(+). It catalyses the reaction 16-hydroxyhexadecanoate + NAD(+) = 16-oxohexadecanoate + NADH + H(+). The catalysed reaction is hexan-1-ol + NAD(+) = hexanal + NADH + H(+). It carries out the reaction (E)-hex-2-en-1-ol + NAD(+) = (E)-hex-2-enal + NADH + H(+). The enzyme catalyses (E)-4-hydroxynon-2-en-1-ol + NAD(+) = (E)-4-hydroxynon-2-enal + NADH + H(+). With respect to regulation, retinol oxidation is inhibited by the detergent Tween 80. Ethanol inhibits both all-trans-retinol and 9-cis-retinol oxidation. 13-cis-retinol is an effective competitive inhibitor of the 9-cis-retinol oxidation. All-trans-retinoic acid is a powerful inhibitor of all-trans-retinol oxidation. 13-cis-retinoic acid is a powerful inhibitor of all-trans-retinol oxidation. Cimetidine competitively inhibited ethanol oxidation. Functionally, catalyzes the NAD-dependent oxidation of all-trans-retinol, alcohol, aldehyde and omega-hydroxy fatty acids and their derivatives. Oxidizes preferentially all trans-retinol, all-trans-4-hydroxyretinol, 9-cis-retinol, 2-hexenol, and long chain omega-hydroxy fatty acids such as juniperic acid. In vitro can also catalyze the NADH-dependent reduction of all-trans-retinal and aldehydes and their derivatives. Reduces preferentially all trans-retinal, all-trans-4-oxoretinal and hexanal. Catalyzes in the oxidative direction with higher efficiency. Therefore may participate in retinoid metabolism, fatty acid omega-oxidation, and elimination of cytotoxic aldehydes produced by lipid peroxidation. This is All-trans-retinol dehydrogenase [NAD(+)] ADH7 (Adh7) from Mus musculus (Mouse).